The sequence spans 184 residues: MATVEVTPAVTALPENETADEVTKPQEPQPEAAVAAPPAPAEPVTEEPEKAAPEAVEAPEEPAATDAKDPAEVAEAEEEVVEEPQEVPEEPVAEAAAKEVEATEGKAEPTGEMKDKTPEATDAPEAPAAAEEPTDAPEAPAVAEEPTNAPEAPAVGEEPEAKEGKPDEAVEEASTEVPVDKTEE.

The disordered stretch occupies residues 1 to 184 (MATVEVTPAV…TEVPVDKTEE (184 aa)). Composition is skewed to low complexity over residues 25-36 (PQEPQPEAAVAA) and 53-65 (PEAVEAPEEPAAT). Positions 72–92 (EVAEAEEEVVEEPQEVPEEPV) are enriched in acidic residues. Positions 96–119 (AAKEVEATEGKAEPTGEMKDKTPE) are enriched in basic and acidic residues. A compositionally biased stretch (low complexity) spans 120-156 (ATDAPEAPAAAEEPTDAPEAPAVAEEPTNAPEAPAVG). Over residues 159–168 (PEAKEGKPDE) the composition is skewed to basic and acidic residues.

This sequence to H.brasiliensis latex allergen Hev b 5.

The protein is Fruit protein pKIWI501 of Actinidia deliciosa (Kiwi).